The sequence spans 273 residues: Bifunctional protein FolD (273 aa).

Residues Gly-155–Ser-157, Ser-180, and Thr-221 each bind NADP(+).

The protein belongs to the tetrahydrofolate dehydrogenase/cyclohydrolase family. Homodimer.

The enzyme catalyses (6R)-5,10-methylene-5,6,7,8-tetrahydrofolate + NADP(+) = (6R)-5,10-methenyltetrahydrofolate + NADPH. The catalysed reaction is (6R)-5,10-methenyltetrahydrofolate + H2O = (6R)-10-formyltetrahydrofolate + H(+). It functions in the pathway one-carbon metabolism; tetrahydrofolate interconversion. Functionally, catalyzes the oxidation of 5,10-methylenetetrahydrofolate to 5,10-methenyltetrahydrofolate and then the hydrolysis of 5,10-methenyltetrahydrofolate to 10-formyltetrahydrofolate. The sequence is that of Bifunctional protein FolD from Coprothermobacter proteolyticus (strain ATCC 35245 / DSM 5265 / OCM 4 / BT).